The sequence spans 256 residues: ATP synthase subunit a (256 aa).

6 consecutive transmembrane segments (helical) span residues 33-53 (ITTF…LTLL), 92-112 (YFPL…IGMI), 122-142 (MVFI…IGLY), 148-168 (FFAL…LVLI), 191-211 (GHLL…VSIV), and 235-255 (MIQS…GLYL).

It belongs to the ATPase A chain family. In terms of assembly, F-type ATPases have 2 components, CF(1) - the catalytic core - and CF(0) - the membrane proton channel. CF(1) has five subunits: alpha(3), beta(3), gamma(1), delta(1), epsilon(1). CF(0) has three main subunits: a, b and c.

The protein resides in the mitochondrion inner membrane. Its function is as follows. Mitochondrial membrane ATP synthase (F(1)F(0) ATP synthase or Complex V) produces ATP from ADP in the presence of a proton gradient across the membrane which is generated by electron transport complexes of the respiratory chain. F-type ATPases consist of two structural domains, F(1) - containing the extramembraneous catalytic core and F(0) - containing the membrane proton channel, linked together by a central stalk and a peripheral stalk. During catalysis, ATP synthesis in the catalytic domain of F(1) is coupled via a rotary mechanism of the central stalk subunits to proton translocation. Key component of the proton channel; it may play a direct role in the translocation of protons across the membrane. The protein is ATP synthase subunit a (ATP6) of Wickerhamomyces canadensis (Yeast).